We begin with the raw amino-acid sequence, 400 residues long: Elongation factor Tu 2 (400 aa).

The region spanning lysine 10–glutamine 209 is the tr-type G domain. The segment at glycine 19–threonine 26 is G1. A GTP-binding site is contributed by glycine 19–threonine 26. Threonine 26 contacts Mg(2+). A G2 region spans residues glycine 60–asparagine 64. The segment at aspartate 81–glycine 84 is G3. Residues aspartate 81–histidine 85 and asparagine 136–aspartate 139 contribute to the GTP site. The interval asparagine 136–aspartate 139 is G4. Residues serine 174–leucine 176 are G5.

The protein belongs to the TRAFAC class translation factor GTPase superfamily. Classic translation factor GTPase family. EF-Tu/EF-1A subfamily. Monomer.

The protein localises to the cytoplasm. It catalyses the reaction GTP + H2O = GDP + phosphate + H(+). Functionally, GTP hydrolase that promotes the GTP-dependent binding of aminoacyl-tRNA to the A-site of ribosomes during protein biosynthesis. This Carboxydothermus hydrogenoformans (strain ATCC BAA-161 / DSM 6008 / Z-2901) protein is Elongation factor Tu 2.